The chain runs to 456 residues: Outer membrane efflux protein BepC (456 aa).

Positions 1–28 are cleaved as a signal peptide; the sequence is MRYTVFKACKELVAAAVLLSGTVLTGQA. Residues 312–341 adopt a coiled-coil conformation; sequence RTSAQIRQSKEQLGQARIEVDVVQDKVRQA.

The protein belongs to the outer membrane factor (OMF) (TC 1.B.17) family. In terms of assembly, probably part of a tripartite efflux pump, which is composed of an outer membrane efflux protein, an inner membrane protein and a protein that expands the periplasmic space. Could form a tripartite pump with BepD and BepE or with BepF and BepG.

The protein resides in the cell outer membrane. In terms of biological role, involved in the efflux of toxic and relatively hydrophobic compounds. Influences survival inside the host. The polypeptide is Outer membrane efflux protein BepC (bepC) (Brucella suis biovar 1 (strain 1330)).